Consider the following 350-residue polypeptide: MEPKRIREGYLVKKGSVFNTWKPMWVVLLEDGIEFYKKKSDNSPKGMIPLKGSTLTSPCQDFGKRMFVFKITTTKQQDHFFQAAFLEERDAWVRDIKKAIKCIEGGQKFARKSTRRSIRLPETIDLGALYLSMKDTEKGIKELNLEKDKKIFNHCFTGNCVIDWLVSNQSVRNRQEGLMIASSLLNEGYLQPAGDMSKSAVDGTAENPFLDNPDAFYYFPDSGFFCEENSSDDDVILKEEFRGVIIKQGCLLKQGHRRKNWKVRKFILREDPAYLHYYDPAGAEDPLGAIHLRGCVVTSVESNSNGRKSEEENLFEIITADEVHYFLQAATPKERTEWIRAIQMASRTGK.

Residues 4–101 (KRIREGYLVK…WVRDIKKAIK (98 aa)) form the PH 1 domain. The residue at position 64 (K64) is an N6-acetyllysine. 2 positions are modified to phosphoserine; by PKC: S113 and S117. Residues 136 to 221 (TEKGIKELNL…NPDAFYYFPD (86 aa)) enclose the DEP domain. In terms of domain architecture, PH 2 spans 244-347 (VIIKQGCLLK…WIRAIQMASR (104 aa)).

In terms of biological role, major protein kinase C substrate of platelets. This is Pleckstrin (PLEK) from Homo sapiens (Human).